A 101-amino-acid chain; its full sequence is MVSLSDYLILSSVIFCIGLVGIFVNRTNIITLLMCVELILVAVNTNFVAFSHFLGNEVGQIFVFFILTVAAAEVAIGLAILTLLFRNRGSISVDVTNSLKG.

The next 3 helical transmembrane spans lie at 4-24 (LSDY…GIFV), 29-49 (IITL…NFVA), and 61-81 (IFVF…LAIL).

Belongs to the complex I subunit 4L family. In terms of assembly, NDH-1 is composed of 14 different subunits. Subunits NuoA, H, J, K, L, M, N constitute the membrane sector of the complex.

It is found in the cell inner membrane. The enzyme catalyses a quinone + NADH + 5 H(+)(in) = a quinol + NAD(+) + 4 H(+)(out). Functionally, NDH-1 shuttles electrons from NADH, via FMN and iron-sulfur (Fe-S) centers, to quinones in the respiratory chain. The immediate electron acceptor for the enzyme in this species is believed to be ubiquinone. Couples the redox reaction to proton translocation (for every two electrons transferred, four hydrogen ions are translocated across the cytoplasmic membrane), and thus conserves the redox energy in a proton gradient. This is NADH-quinone oxidoreductase subunit K from Ruthia magnifica subsp. Calyptogena magnifica.